The following is a 167-amino-acid chain: Crossover junction endodeoxyribonuclease RuvC (167 aa).

Catalysis depends on residues Asp-11, Glu-71, and Asp-143. Mg(2+) is bound by residues Asp-11, Glu-71, and Asp-143.

This sequence belongs to the RuvC family. Homodimer which binds Holliday junction (HJ) DNA. The HJ becomes 2-fold symmetrical on binding to RuvC with unstacked arms; it has a different conformation from HJ DNA in complex with RuvA. In the full resolvosome a probable DNA-RuvA(4)-RuvB(12)-RuvC(2) complex forms which resolves the HJ. Requires Mg(2+) as cofactor.

The protein resides in the cytoplasm. It catalyses the reaction Endonucleolytic cleavage at a junction such as a reciprocal single-stranded crossover between two homologous DNA duplexes (Holliday junction).. In terms of biological role, the RuvA-RuvB-RuvC complex processes Holliday junction (HJ) DNA during genetic recombination and DNA repair. Endonuclease that resolves HJ intermediates. Cleaves cruciform DNA by making single-stranded nicks across the HJ at symmetrical positions within the homologous arms, yielding a 5'-phosphate and a 3'-hydroxyl group; requires a central core of homology in the junction. The consensus cleavage sequence is 5'-(A/T)TT(C/G)-3'. Cleavage occurs on the 3'-side of the TT dinucleotide at the point of strand exchange. HJ branch migration catalyzed by RuvA-RuvB allows RuvC to scan DNA until it finds its consensus sequence, where it cleaves and resolves the cruciform DNA. The sequence is that of Crossover junction endodeoxyribonuclease RuvC from Hyphomonas neptunium (strain ATCC 15444).